The chain runs to 132 residues: Small ribosomal subunit protein uS8c (132 aa).

The protein belongs to the universal ribosomal protein uS8 family. Part of the 30S ribosomal subunit.

It is found in the plastid. The protein localises to the chloroplast. Its function is as follows. One of the primary rRNA binding proteins, it binds directly to 16S rRNA central domain where it helps coordinate assembly of the platform of the 30S subunit. The protein is Small ribosomal subunit protein uS8c (rps8) of Liriodendron tulipifera (Tuliptree).